The sequence spans 369 residues: GTPase Obg (369 aa).

An Obg domain is found at 1–159 (MKFIDEAKIE…RELRLELKVL (159 aa)). The segment at 128–148 (IHFKSSTNRAPRQKSEGKEGE) is disordered. In terms of domain architecture, OBG-type G spans 160-333 (ADIGLLGMPN…LVTEIYEYIA (174 aa)). GTP-binding positions include 166-173 (GMPNAGKS), 191-195 (FTTLH), 213-216 (DIPG), 283-286 (NKLD), and 314-316 (SAL). Mg(2+) is bound by residues Ser-173 and Thr-193.

This sequence belongs to the TRAFAC class OBG-HflX-like GTPase superfamily. OBG GTPase family. In terms of assembly, monomer. Mg(2+) is required as a cofactor.

It localises to the cytoplasm. Its function is as follows. An essential GTPase which binds GTP, GDP and possibly (p)ppGpp with moderate affinity, with high nucleotide exchange rates and a fairly low GTP hydrolysis rate. Plays a role in control of the cell cycle, stress response, ribosome biogenesis and in those bacteria that undergo differentiation, in morphogenesis control. The sequence is that of GTPase Obg from Janthinobacterium sp. (strain Marseille) (Minibacterium massiliensis).